Here is a 116-residue protein sequence, read N- to C-terminus: Ribonuclease P protein component (116 aa).

Belongs to the RnpA family. As to quaternary structure, consists of a catalytic RNA component (M1 or rnpB) and a protein subunit.

It carries out the reaction Endonucleolytic cleavage of RNA, removing 5'-extranucleotides from tRNA precursor.. Functionally, RNaseP catalyzes the removal of the 5'-leader sequence from pre-tRNA to produce the mature 5'-terminus. It can also cleave other RNA substrates such as 4.5S RNA. The protein component plays an auxiliary but essential role in vivo by binding to the 5'-leader sequence and broadening the substrate specificity of the ribozyme. The polypeptide is Ribonuclease P protein component (Geobacter sp. (strain M21)).